A 29-amino-acid chain; its full sequence is Cytochrome b6-f complex subunit 8 (29 aa).

The chain crosses the membrane as a helical span at residues 3–23 (IISLGWSSLLVVFTFSLSLVV).

The protein belongs to the PetN family. The 4 large subunits of the cytochrome b6-f complex are cytochrome b6, subunit IV (17 kDa polypeptide, PetD), cytochrome f and the Rieske protein, while the 4 small subunits are PetG, PetL, PetM and PetN. The complex functions as a dimer.

The protein resides in the plastid. It localises to the chloroplast thylakoid membrane. In terms of biological role, component of the cytochrome b6-f complex, which mediates electron transfer between photosystem II (PSII) and photosystem I (PSI), cyclic electron flow around PSI, and state transitions. The polypeptide is Cytochrome b6-f complex subunit 8 (Rhodomonas salina (Cryptomonas salina)).